A 648-amino-acid chain; its full sequence is Bifunctional lysine-specific demethylase and histidyl-hydroxylase NO66 (648 aa).

The interval 1–168 (MSKVSSIFDT…KGAKAAKKNK (168 aa)) is disordered. Over residues 17–28 (PATTENGAAAKP) the composition is skewed to low complexity. The segment covering 109-119 (DHRKHKEKLRK) has biased composition (basic residues). Polar residues predominate over residues 123-137 (GVENSRQAAASTSML). A compositionally biased stretch (basic residues) spans 155–168 (PVHHKGAKAAKKNK). Residues 308–453 (CSIRMLNPQT…DLLELYLPHA (146 aa)) form the JmjC domain. The Fe cation site is built by histidine 354, aspartate 356, and histidine 419.

Belongs to the ROX family. NO66 subfamily. Fe(2+) serves as cofactor.

It localises to the nucleus. It carries out the reaction N(6),N(6)-dimethyl-L-lysyl(36)-[histone H3] + 2 2-oxoglutarate + 2 O2 = L-lysyl(36)-[histone H3] + 2 formaldehyde + 2 succinate + 2 CO2. Its function is as follows. Oxygenase that can act as both a histone lysine demethylase and a ribosomal histidine hydroxylase. Specifically demethylates 'Lys-4' (H3K4me) and 'Lys-36' (H3K36me) of histone H3, thereby playing a central role in histone code. This chain is Bifunctional lysine-specific demethylase and histidyl-hydroxylase NO66, found in Culex quinquefasciatus (Southern house mosquito).